Reading from the N-terminus, the 194-residue chain is MIRIDELLRAYRKGLFPMADPDDEKVYWCQPYKRAVVPLLSYMPSRDVARILRRGEFEVRIDSDFEGVIRGCAAPRKSDSQTWISPEIMDAYLTLNQLGVAHSVECWHHGELSGGLYGLSMGAAFFGESMFFRRSYASQVAFDHLVRRLKDRGYLLLDAQIMNPHLQKLGAVEIDHDEYMLQLDIALGKKIRFI.

This sequence belongs to the L/F-transferase family.

Its subcellular location is the cytoplasm. The catalysed reaction is N-terminal L-lysyl-[protein] + L-leucyl-tRNA(Leu) = N-terminal L-leucyl-L-lysyl-[protein] + tRNA(Leu) + H(+). It catalyses the reaction N-terminal L-arginyl-[protein] + L-leucyl-tRNA(Leu) = N-terminal L-leucyl-L-arginyl-[protein] + tRNA(Leu) + H(+). It carries out the reaction L-phenylalanyl-tRNA(Phe) + an N-terminal L-alpha-aminoacyl-[protein] = an N-terminal L-phenylalanyl-L-alpha-aminoacyl-[protein] + tRNA(Phe). Functionally, functions in the N-end rule pathway of protein degradation where it conjugates Leu, Phe and, less efficiently, Met from aminoacyl-tRNAs to the N-termini of proteins containing an N-terminal arginine or lysine. This is Leucyl/phenylalanyl-tRNA--protein transferase from Chlorobium phaeobacteroides (strain DSM 266 / SMG 266 / 2430).